We begin with the raw amino-acid sequence, 297 residues long: N-acetylmuramic acid 6-phosphate etherase (297 aa).

The 164-residue stretch at 55–218 folds into the SIS domain; that stretch reads AAAALKAGGR…STGAMVKLGK (164 aa). The Proton donor role is filled by glutamate 83. Glutamate 114 is a catalytic residue.

It belongs to the GCKR-like family. MurNAc-6-P etherase subfamily. In terms of assembly, homodimer.

It catalyses the reaction N-acetyl-D-muramate 6-phosphate + H2O = N-acetyl-D-glucosamine 6-phosphate + (R)-lactate. The protein operates within amino-sugar metabolism; 1,6-anhydro-N-acetylmuramate degradation. Its pathway is amino-sugar metabolism; N-acetylmuramate degradation. It participates in cell wall biogenesis; peptidoglycan recycling. In terms of biological role, specifically catalyzes the cleavage of the D-lactyl ether substituent of MurNAc 6-phosphate, producing GlcNAc 6-phosphate and D-lactate. Together with AnmK, is also required for the utilization of anhydro-N-acetylmuramic acid (anhMurNAc) either imported from the medium or derived from its own cell wall murein, and thus plays a role in cell wall recycling. This Serratia proteamaculans (strain 568) protein is N-acetylmuramic acid 6-phosphate etherase.